A 192-amino-acid chain; its full sequence is Ras-like protein RAS2 (192 aa).

GTP is bound at residue Gly15 to Ser22. The Effector region motif lies at Tyr37 to Tyr45. Residues Asp62–Gln66 and Asn121–Asp124 each bind GTP. At Cys189 the chain carries Cysteine methyl ester. Cys189 carries S-geranylgeranyl cysteine lipidation. Positions Ile190–Leu192 are cleaved as a propeptide — removed in mature form.

This sequence belongs to the small GTPase superfamily. Ras family.

Its subcellular location is the cell membrane. It catalyses the reaction GTP + H2O = GDP + phosphate + H(+). Its activity is regulated as follows. Alternates between an inactive form bound to GDP and an active form bound to GTP. Activated by a guanine nucleotide-exchange factor (GEF) and inactivated by a GTPase-activating protein (GAP). Its function is as follows. Ras proteins bind GDP/GTP and possess intrinsic GTPase activity. This Hydra vulgaris (Hydra) protein is Ras-like protein RAS2 (RAS2).